The chain runs to 715 residues: Probable ubiquitin thioesterase DG1039 (715 aa).

Residues 86–302 (KSRNEIKRKA…NNQTDDKLDN (217 aa)) are a coiled coil. Over residues 287–302 (NKKLENNNQTDDKLDN) the composition is skewed to basic and acidic residues. 3 disordered regions span residues 287 to 367 (NKKL…YNST), 398 to 450 (QYKQ…QQQY), and 502 to 527 (LAQSPAVNTPSITPTTNKPNIDSSEA). Residues 339–349 (TTAQLPLSITQ) are compositionally biased toward polar residues. Residues 398 to 409 (QYKQQQQQQPIQ) are compositionally biased toward low complexity. 2 stretches are compositionally biased toward polar residues: residues 410–427 (SPTNNINRPNIPQYNNYN) and 502–525 (LAQSPAVNTPSITPTTNKPNIDSS). In terms of domain architecture, MPN spans 537-666 (IIVHGEVFQE…IFRLTDPPGL (130 aa)). Zn(2+)-binding residues include histidine 615, histidine 617, aspartate 628, histidine 630, cysteine 672, histidine 678, and histidine 680. Positions 615-628 (HTHPTQDCFLSAVD) match the JAMM motif motif.

Belongs to the peptidase M67C family. The cofactor is Zn(2+).

May be a zinc metalloprotease that specifically cleaves ubiquitin chains. The chain is Probable ubiquitin thioesterase DG1039 (DG1039) from Dictyostelium discoideum (Social amoeba).